We begin with the raw amino-acid sequence, 833 residues long: MSFYNHKEIEPKWQGYWAEHHTFKTGTDASKPKFYALDMFPYPSGVGLHVGHPEGYTATDILSRYKRAQGYNVLHPMGWDAFGLPAEQYAMDTGNDPAEFTAENIANFKRQINALGFSYDWDREVNTTDPNYYKWTQWIFTKLYEKGLAYEAEVPVNWVEELGTAIANEEVLPDGTSERGGYPVVRKPMRQWMLKITAYAERLLNDLDELDWSESIKDMQRNWIGKSTGANVTFKVKGTDKEFTVFTTRPDTLFGATFTVLAPEHELVDAITSSEQAEAVADYKHQASLKSDLVRTDLAKEKTGVWTGAYAINPVNGKEMPIWIADYVLASYGTGAVMAVPAHDQRDWEFAKQFDLPIVEVLEGGNVEEAAYTEDGLHVNSDFLDGLNKEDAIAKIVACLEEKGCGQEKVTYRLRDWLFSRQRYWGEPIPIIHWEDGTSTAVPETELPLVLPVTKDIRPSGTGESPLANLTDWLEVTREDGVKGRRETNTMPQWAGSSWYYLRYIDPHNTEKLADEDLLKQWLPVDIYVGGAEHAVLHLLYARFWHKFLYDLGVVPTKEPFQKLFNQGMILGTSYRDHRGALVATDKVEKRDGSFFHIETGEELEQAPAKMSKSLKNVVNPDDVVEQYGADTLRVYEMFMGPLDASIAWSEEGLEGSRKFLDRVYRLITSKEILAENNGALDKAYNETVKAVTEQIESLKFNTAIAQLMVFVNAANKEDKLYVDYAKGFIQLIAPFAPHLAEELWQTVAETGESISYVAWPTWDESKLVEDEIEIVVQIKGKVRAKLMVAKDLSREELQEIALADEKVKAEIDGKEIVKVISVPNKLVNIVVK.

Residues 41–52 carry the 'HIGH' region motif; that stretch reads PYPSGVGLHVGH. The short motif at 610 to 614 is the 'KMSKS' region element; the sequence is KMSKS. Lysine 613 serves as a coordination point for ATP.

It belongs to the class-I aminoacyl-tRNA synthetase family.

Its subcellular location is the cytoplasm. It catalyses the reaction tRNA(Leu) + L-leucine + ATP = L-leucyl-tRNA(Leu) + AMP + diphosphate. The chain is Leucine--tRNA ligase from Streptococcus pneumoniae serotype 2 (strain D39 / NCTC 7466).